The primary structure comprises 196 residues: GTP cyclohydrolase-2 (196 aa).

Position 49 to 53 (49 to 53 (RVHSE)) interacts with GTP. 3 residues coordinate Zn(2+): Cys-54, Cys-65, and Cys-67. Residues Gln-70, 92–94 (EGR), and Thr-114 each bind GTP. The active-site Proton acceptor is the Asp-126. Arg-128 serves as the catalytic Nucleophile. Residues Thr-149 and Lys-154 each coordinate GTP.

Belongs to the GTP cyclohydrolase II family. As to quaternary structure, homodimer. Zn(2+) serves as cofactor.

The catalysed reaction is GTP + 4 H2O = 2,5-diamino-6-hydroxy-4-(5-phosphoribosylamino)-pyrimidine + formate + 2 phosphate + 3 H(+). The protein operates within cofactor biosynthesis; riboflavin biosynthesis; 5-amino-6-(D-ribitylamino)uracil from GTP: step 1/4. Catalyzes the conversion of GTP to 2,5-diamino-6-ribosylamino-4(3H)-pyrimidinone 5'-phosphate (DARP), formate and pyrophosphate. The protein is GTP cyclohydrolase-2 of Escherichia coli O127:H6 (strain E2348/69 / EPEC).